The chain runs to 301 residues: MPGIKEIRTKIKSVQNTRKITKAMEMVAASKMRKAQERMRAGRPYANKVREIAAHLMQANPEYNHPYLQQREIKAVGVVLVTTDKGLCGGLNTNISRLTLNRFKDFEAQNIQVRATAFGNKGLGLLTRIGTKLVSQETQLGDKPDLDRLLGAIKVQLDDYLEGRIDALYVATTRFVNTMKQEPVFLRLLPLASGLNDPFQSGLEHLESTTEVKSDYGWDYIYEPDAKSVIDDLLQRYVEGLLYQAVAENMASEQSARMVAMKAASDNAKKVIGELQLVYNKTRQAAITKEISEIVGGAAAV.

The protein belongs to the ATPase gamma chain family. F-type ATPases have 2 components, CF(1) - the catalytic core - and CF(0) - the membrane proton channel. CF(1) has five subunits: alpha(3), beta(3), gamma(1), delta(1), epsilon(1). CF(0) has three main subunits: a, b and c.

Its subcellular location is the cell inner membrane. Functionally, produces ATP from ADP in the presence of a proton gradient across the membrane. The gamma chain is believed to be important in regulating ATPase activity and the flow of protons through the CF(0) complex. The protein is ATP synthase gamma chain of Bordetella avium (strain 197N).